The primary structure comprises 325 residues: Geranylgeranyl transferase type-2 subunit beta (325 aa).

PFTB repeat units follow at residues Lys-9–Asp-50, Lys-57–Asp-99, Lys-109–Gly-150, Val-157–Asn-198, Leu-208–Gly-249, and Tyr-256–Gly-298. Residues His-183–Ala-185 and Arg-228–Trp-240 each bind geranylgeranyl diphosphate. The Zn(2+) site is built by Asp-234, Cys-236, and His-286.

This sequence belongs to the protein prenyltransferase subunit beta family. Heterodimer of an alpha and a beta subunit. Requires Zn(2+) as cofactor.

It catalyses the reaction geranylgeranyl diphosphate + L-cysteinyl-[protein] = S-geranylgeranyl-L-cysteinyl-[protein] + diphosphate. Functionally, catalyzes the transfer of a geranyl-geranyl moiety from geranyl-geranyl pyrophosphate to proteins having the C-terminal -XCC or -XCXC, where both cysteines may become modified. Acts on YPT1 and SEC4. The polypeptide is Geranylgeranyl transferase type-2 subunit beta (BET2) (Saccharomyces cerevisiae (strain ATCC 204508 / S288c) (Baker's yeast)).